The sequence spans 593 residues: Inactive metallocarboxypeptidase ECM14 (593 aa).

A signal peptide spans 1-22 (MHVTVQLSLLLSLASSLPLVSA). A propeptide spanning residues 23-175 (IPQHDGQAYT…QAIYESYPKN (153 aa)) is cleaved from the precursor. Disordered regions lie at residues 75 to 98 (VPQR…KAPA) and 172 to 202 (YPKN…SQPH). Residues 78–88 (RGKDSETKTGK) are compositionally biased toward basic and acidic residues. A compositionally biased stretch (polar residues) spans 188–199 (RRFSPSASTPES). A Peptidase M14 domain is found at 211 to 537 (DYQPLSVLLP…HAVVAMGKFL (327 aa)). Residues His276 and Glu279 each coordinate Zn(2+). Residues 276–279 (HARE), Arg334, and 351–352 (DR) contribute to the substrate site. Cys345 and Cys368 form a disulfide bridge. N-linked (GlcNAc...) asparagine glycosylation occurs at Asn361. His408 serves as a coordination point for Zn(2+). Residue 409-410 (SY) participates in substrate binding. The tract at residues 548–593 (DEPHAGEQTQDNSYDEDGDNLFRAQGGDPQVRFTRRNIGAHDDDSE) is disordered.

Belongs to the peptidase M14 family. It depends on Zn(2+) as a cofactor.

It localises to the vacuole. It is found in the secreted. Its function is as follows. Inactive carboxypeptidase that may play a role in cell wall organization and biogenesis. This chain is Inactive metallocarboxypeptidase ECM14 (ECM14), found in Arthroderma otae (strain ATCC MYA-4605 / CBS 113480) (Microsporum canis).